The sequence spans 175 residues: MSSQIRQNYSTDVEAAVNSLVNMYLQASYTYLSLGFYFDRDDVALEGVSHFFRELAEEKREGYERLLKMQNQRGGRALFQDIKKPAEDEWGKTPDAMKAAMALEKKLNQALLDLHALGSAHTDPHLCDFLETHFLDEEVKLIKKMGDHLTNLHRLGGPEAGLGEYLFERLTLKHD.

N-acetylserine is present on Ser-2. In terms of domain architecture, Ferritin-like diiron spans 7-156 (QNYSTDVEAA…DHLTNLHRLG (150 aa)). Fe cation is bound by residues Glu-54, Glu-57, Glu-58, Glu-61, and Glu-64. The interval 54 to 61 (ELAEEKRE) is catalytic site for iron oxidation.

Belongs to the ferritin family. As to quaternary structure, oligomer of 24 subunits. There are two types of subunits: L (light) chain and H (heavy) chain. The major chain can be light or heavy, depending on the species and tissue type. The functional molecule forms a roughly spherical shell with a diameter of 12 nm and contains a central cavity into which the insoluble mineral iron core is deposited. Interacts with NCOA4.

Its subcellular location is the cytoplasmic vesicle. It is found in the autophagosome. It localises to the cytoplasm. The protein localises to the autolysosome. In terms of biological role, stores iron in a soluble, non-toxic, readily available form. Important for iron homeostasis. Iron is taken up in the ferrous form and deposited as ferric hydroxides after oxidation. Also plays a role in delivery of iron to cells. Mediates iron uptake in capsule cells of the developing kidney. Delivery to lysosomes by the cargo receptor NCOA4 for autophagic degradation and release or iron. In Pongo abelii (Sumatran orangutan), this protein is Ferritin light chain (FTL).